We begin with the raw amino-acid sequence, 505 residues long: Protein disulfide-isomerase A3 (505 aa).

An N-terminal signal peptide occupies residues 1–24 (MRLRRLALFPGVALLLAAARLAAA). The Thioredoxin 1 domain occupies 25 to 133 (SDVLELTDDN…IVSHLKKQAG (109 aa)). Catalysis depends on nucleophile residues C57 and C60. A disulfide bridge connects residues C57 and C60. The residue at position 61 (K61) is an N6-methyllysine. C85 and C92 form a disulfide bridge. At K129 the chain carries N6-succinyllysine. N6-acetyllysine is present on K152. Residue K218 is modified to N6-succinyllysine. Position 252 is an N6-acetyllysine (K252). T319 bears the Phosphothreonine mark. The region spanning 343-485 (SRDGKALERF…FISYLQREAT (143 aa)) is the Thioredoxin 2 domain. At K362 the chain carries N6-acetyllysine. Active-site nucleophile residues include C406 and C409. Cysteines 406 and 409 form a disulfide. Positions 484–505 (ATNPPVIQEEKPKKKKKAQEDL) are disordered. The segment covering 491–505 (QEEKPKKKKKAQEDL) has biased composition (basic and acidic residues). Residue K494 is modified to N6-acetyllysine. Residues 502-505 (QEDL) carry the Prevents secretion from ER motif.

The protein belongs to the protein disulfide isomerase family. In terms of assembly, part of the major histocompatibility complex class I (MHC I) peptide loading complex composed of TAP1, TAP2, B2M, MHC heavy chain, TAPBP, PDIA3, and CALR. Interacts with ERP27 and CANX. Interacts with SERPINA2 and with SERPINA1. Interacts with ATP2A2. Post-translationally, within the major histocompatibility complex class I (MHC I) peptide loading complex forms reversible disulfide-linked heterodimers with TAPBP as part of its protein folding chaperone activity. This is essential to assist the dynamic assembly of the MHC I complex with high affinity antigens in the endoplasmic reticulum. In terms of processing, phosphorylated.

The protein localises to the endoplasmic reticulum. Its subcellular location is the endoplasmic reticulum lumen. The protein resides in the melanosome. The catalysed reaction is Catalyzes the rearrangement of -S-S- bonds in proteins.. In terms of biological role, protein disulfide isomerase that catalyzes the formation, isomerization, and reduction or oxidation of disulfide bonds in client proteins and functions as a protein folding chaperone. Core component of the major histocompatibility complex class I (MHC I) peptide loading complex where it functions as an essential folding chaperone for TAPBP. Through TAPBP, assists the dynamic assembly of the MHC I complex with high affinity antigens in the endoplasmic reticulum. Therefore, plays a crucial role in the presentation of antigens to cytotoxic T cells in adaptive immunity. This Chlorocebus aethiops (Green monkey) protein is Protein disulfide-isomerase A3 (PDIA3).